The following is a 153-amino-acid chain: uncharacterized protein (153 aa).

The signal sequence occupies residues 1–22 (MKAFNKLFSLVVASVLVFSLAG). Residue C23 is the site of N-palmitoyl cysteine attachment. C23 carries S-diacylglycerol cysteine lipidation.

The protein to L.monocytogenes lmo0207.

It is found in the cell membrane. This is an uncharacterized protein from Escherichia coli (strain K12).